The chain runs to 235 residues: Ribonuclease 3 (235 aa).

One can recognise an RNase III domain in the interval 7-131; it reads LSALEARIGH…IIGAVFLDGG (125 aa). Residue E45 participates in Mg(2+) binding. The active site involves D49. Residues D117 and E120 each contribute to the Mg(2+) site. The active site involves E120. The 70-residue stretch at 156-225 folds into the DRBM domain; that stretch reads DPKTTLQEWA…AAAFLTREKI (70 aa).

The protein belongs to the ribonuclease III family. As to quaternary structure, homodimer. Mg(2+) serves as cofactor.

It localises to the cytoplasm. The enzyme catalyses Endonucleolytic cleavage to 5'-phosphomonoester.. In terms of biological role, digests double-stranded RNA. Involved in the processing of primary rRNA transcript to yield the immediate precursors to the large and small rRNAs (23S and 16S). Processes some mRNAs, and tRNAs when they are encoded in the rRNA operon. Processes pre-crRNA and tracrRNA of type II CRISPR loci if present in the organism. The polypeptide is Ribonuclease 3 (Methylocella silvestris (strain DSM 15510 / CIP 108128 / LMG 27833 / NCIMB 13906 / BL2)).